Consider the following 385-residue polypeptide: Di-N-acetylchitobiase (385 aa).

The N-terminal stretch at Met1–Gly38 is a signal peptide. Residues Thr39 to Arg385 enclose the GH18 domain. Glu143 serves as the catalytic Proton donor. 4 N-linked (GlcNAc...) asparagine glycosylation sites follow: Asn193, Asn228, Asn262, and Asn299.

It belongs to the glycosyl hydrolase 18 family.

It is found in the lysosome. Involved in the degradation of asparagine-linked glycoproteins. Hydrolyze of N-acetyl-beta-D-glucosamine (1-4)N-acetylglucosamine chitobiose core from the reducing end of the bond, it requires prior cleavage by glycosylasparaginase. This chain is Di-N-acetylchitobiase (CTBS), found in Homo sapiens (Human).